Here is a 183-residue protein sequence, read N- to C-terminus: Crossover junction endodeoxyribonuclease RuvC (183 aa).

Residues Asp-7, Glu-66, and Asp-138 contribute to the active site. Residues Asp-7, Glu-66, and Asp-138 each contribute to the Mg(2+) site.

Belongs to the RuvC family. Homodimer which binds Holliday junction (HJ) DNA. The HJ becomes 2-fold symmetrical on binding to RuvC with unstacked arms; it has a different conformation from HJ DNA in complex with RuvA. In the full resolvosome a probable DNA-RuvA(4)-RuvB(12)-RuvC(2) complex forms which resolves the HJ. It depends on Mg(2+) as a cofactor.

It is found in the cytoplasm. The enzyme catalyses Endonucleolytic cleavage at a junction such as a reciprocal single-stranded crossover between two homologous DNA duplexes (Holliday junction).. In terms of biological role, the RuvA-RuvB-RuvC complex processes Holliday junction (HJ) DNA during genetic recombination and DNA repair. Endonuclease that resolves HJ intermediates. Cleaves cruciform DNA by making single-stranded nicks across the HJ at symmetrical positions within the homologous arms, yielding a 5'-phosphate and a 3'-hydroxyl group; requires a central core of homology in the junction. The consensus cleavage sequence is 5'-(A/T)TT(C/G)-3'. Cleavage occurs on the 3'-side of the TT dinucleotide at the point of strand exchange. HJ branch migration catalyzed by RuvA-RuvB allows RuvC to scan DNA until it finds its consensus sequence, where it cleaves and resolves the cruciform DNA. The protein is Crossover junction endodeoxyribonuclease RuvC of Burkholderia ambifaria (strain MC40-6).